The following is a 228-amino-acid chain: NAD(P)H-hydrate epimerase (228 aa).

In terms of domain architecture, YjeF N-terminal spans 9 to 209 (VRAVERLAHR…LLGLTPAFLA (201 aa)). Residue 53–57 (NNGGD) participates in (6S)-NADPHX binding. Residues N54 and D115 each contribute to the K(+) site. (6S)-NADPHX contacts are provided by residues 119-125 (GIGLARP) and D148. S151 serves as a coordination point for K(+).

The protein belongs to the NnrE/AIBP family. The cofactor is K(+).

It carries out the reaction (6R)-NADHX = (6S)-NADHX. The catalysed reaction is (6R)-NADPHX = (6S)-NADPHX. In terms of biological role, catalyzes the epimerization of the S- and R-forms of NAD(P)HX, a damaged form of NAD(P)H that is a result of enzymatic or heat-dependent hydration. This is a prerequisite for the S-specific NAD(P)H-hydrate dehydratase to allow the repair of both epimers of NAD(P)HX. This is NAD(P)H-hydrate epimerase from Bordetella parapertussis (strain 12822 / ATCC BAA-587 / NCTC 13253).